Consider the following 234-residue polypeptide: Glucosamine-6-phosphate deaminase (234 aa).

D63 serves as the catalytic Proton acceptor; for enolization step. The active-site For ring-opening step is N129. Catalysis depends on H131, which acts as the Proton acceptor; for ring-opening step. Catalysis depends on E136, which acts as the For ring-opening step.

Belongs to the glucosamine/galactosamine-6-phosphate isomerase family. NagB subfamily.

It carries out the reaction alpha-D-glucosamine 6-phosphate + H2O = beta-D-fructose 6-phosphate + NH4(+). The protein operates within amino-sugar metabolism; N-acetylneuraminate degradation; D-fructose 6-phosphate from N-acetylneuraminate: step 5/5. Catalyzes the reversible isomerization-deamination of glucosamine 6-phosphate (GlcN6P) to form fructose 6-phosphate (Fru6P) and ammonium ion. The chain is Glucosamine-6-phosphate deaminase from Listeria welshimeri serovar 6b (strain ATCC 35897 / DSM 20650 / CCUG 15529 / CIP 8149 / NCTC 11857 / SLCC 5334 / V8).